Here is a 265-residue protein sequence, read N- to C-terminus: Expansin-like A1 (265 aa).

An N-terminal signal peptide occupies residues 1–20 (MGSFLFLIVVIFLFSSSVNA). Positions 41–147 (SGACAYGSMA…QRVPCDYGNK (107 aa)) constitute an Expansin-like EG45 domain. Residues 42–62 (GACAYGSMATSFFAGHIAAAI) form a helical membrane-spanning segment. Asn-99 and Asn-102 each carry an N-linked (GlcNAc...) asparagine glycan. The region spanning 161-244 (NYLEIKLLYQ…NWEAGKIYDA (84 aa)) is the Expansin-like CBD domain.

This sequence belongs to the expansin family. Expansin-like A subfamily.

The protein localises to the membrane. This chain is Expansin-like A1 (EXLA1), found in Arabidopsis thaliana (Mouse-ear cress).